A 420-amino-acid polypeptide reads, in one-letter code: Gamma-glutamyl phosphate reductase (420 aa).

Belongs to the gamma-glutamyl phosphate reductase family.

It localises to the cytoplasm. It catalyses the reaction L-glutamate 5-semialdehyde + phosphate + NADP(+) = L-glutamyl 5-phosphate + NADPH + H(+). It functions in the pathway amino-acid biosynthesis; L-proline biosynthesis; L-glutamate 5-semialdehyde from L-glutamate: step 2/2. Catalyzes the NADPH-dependent reduction of L-glutamate 5-phosphate into L-glutamate 5-semialdehyde and phosphate. The product spontaneously undergoes cyclization to form 1-pyrroline-5-carboxylate. This chain is Gamma-glutamyl phosphate reductase, found in Neisseria meningitidis serogroup C (strain 053442).